We begin with the raw amino-acid sequence, 213 residues long: Glycerol-3-phosphate acyltransferase (213 aa).

The next 6 membrane-spanning stretches (helical) occupy residues 3–23 (IIILLLIASYLLGAIPFGLWI), 48–68 (ILGVKAGIAVFIFDLLKGTLA), 71–91 (LPLIFHINGVSPLIFGLLAVI), 119–139 (PFFLLYLLVIFILVLWLFSMI), 144–164 (VVAAIFALLGILIFPSFGFIL), and 165–185 (TSYDLLFSIIIFALAIIIIFR).

This sequence belongs to the PlsY family. Probably interacts with PlsX.

It is found in the cell membrane. The catalysed reaction is an acyl phosphate + sn-glycerol 3-phosphate = a 1-acyl-sn-glycero-3-phosphate + phosphate. It functions in the pathway lipid metabolism; phospholipid metabolism. Catalyzes the transfer of an acyl group from acyl-phosphate (acyl-PO(4)) to glycerol-3-phosphate (G3P) to form lysophosphatidic acid (LPA). This enzyme utilizes acyl-phosphate as fatty acyl donor, but not acyl-CoA or acyl-ACP. This is Glycerol-3-phosphate acyltransferase from Lactococcus lactis subsp. cremoris (strain SK11).